A 195-amino-acid polypeptide reads, in one-letter code: Proline-rich protein 3 (195 aa).

An N-terminal signal peptide occupies residues 1 to 29; sequence MKMNFFNSFPQYGVYILGLNLLLCGVSEG.

Component of the acid-insoluble organic matrix of calcified layers of the shell (at protein level).

The protein localises to the secreted. This Lottia gigantea (Giant owl limpet) protein is Proline-rich protein 3.